The primary structure comprises 521 residues: Ankyrin repeat domain-containing protein 34B (521 aa).

ANK repeat units lie at residues threonine 9–glutamate 38, arginine 42–isoleucine 79, phenylalanine 83–leucine 113, and threonine 117–lysine 146. A disordered region spans residues glutamine 161 to serine 188. Polar residues predominate over residues glycine 177 to serine 188.

Belongs to the ANKRD34 family.

The protein localises to the cytoplasm. It localises to the nucleus. The chain is Ankyrin repeat domain-containing protein 34B (ankrd34b) from Xenopus laevis (African clawed frog).